The chain runs to 450 residues: Bestrophin homolog 1 (450 aa).

The Cytoplasmic portion of the chain corresponds to 1-31 (MTINYHKEIMTSHPWTFFLLLFKWKGSIWKA). A helical transmembrane segment spans residues 32–51 (VYMETIIFLICYGIISVIYK). The Extracellular segment spans residues 52-60 (TAMGESSQR). A helical transmembrane segment spans residues 61–82 (TFESLVRYFDKRLSYIPLEFVL). Topologically, residues 83–242 (GFFVTTVVNR…DWVPLPLMYP (160 aa)) are cytoplasmic. A helical transmembrane segment spans residues 243–260 (QLVCLAVNLYFLVSIIAR). Residues 261-278 (QLVIEKHKMVDEVDVYFP) are Extracellular-facing. A helical membrane pass occupies residues 279–292 (VMTFLQFIFYMGWL). Residues 293-450 (KVIDVMLNPF…WKIPTNPQKF (158 aa)) are Cytoplasmic-facing. Ca(2+)-binding residues include Asn-300, Asp-305, and Asp-308.

It belongs to the anion channel-forming bestrophin (TC 1.A.46) family. Calcium-sensitive chloride channel subfamily. As to quaternary structure, forms oligomers.

The protein localises to the cell membrane. It catalyses the reaction chloride(in) = chloride(out). Functionally, ligand-gated anion channel that allows the movement of chloride monoatomic anions across cell membranes when activated by Calcium (Ca2+). The chain is Bestrophin homolog 1 (best-1) from Caenorhabditis elegans.